Here is a 755-residue protein sequence, read N- to C-terminus: Thermostable beta-glucosidase B (755 aa).

Residue Asp231 is part of the active site.

Belongs to the glycosyl hydrolase 3 family.

The catalysed reaction is Hydrolysis of terminal, non-reducing beta-D-glucosyl residues with release of beta-D-glucose.. It functions in the pathway glycan metabolism; cellulose degradation. The chain is Thermostable beta-glucosidase B (bglB) from Acetivibrio thermocellus (strain ATCC 27405 / DSM 1237 / JCM 9322 / NBRC 103400 / NCIMB 10682 / NRRL B-4536 / VPI 7372) (Clostridium thermocellum).